We begin with the raw amino-acid sequence, 336 residues long: tRNA N6-adenosine threonylcarbamoyltransferase (336 aa).

The Fe cation site is built by H114 and H118. Substrate is bound by residues L136–G140, D169, G182, D186, and N275. Fe cation is bound at residue D302.

It belongs to the KAE1 / TsaD family. The cofactor is Fe(2+).

It is found in the cytoplasm. The enzyme catalyses L-threonylcarbamoyladenylate + adenosine(37) in tRNA = N(6)-L-threonylcarbamoyladenosine(37) in tRNA + AMP + H(+). Required for the formation of a threonylcarbamoyl group on adenosine at position 37 (t(6)A37) in tRNAs that read codons beginning with adenine. Is involved in the transfer of the threonylcarbamoyl moiety of threonylcarbamoyl-AMP (TC-AMP) to the N6 group of A37, together with TsaE and TsaB. TsaD likely plays a direct catalytic role in this reaction. The sequence is that of tRNA N6-adenosine threonylcarbamoyltransferase from Streptococcus agalactiae serotype Ia (strain ATCC 27591 / A909 / CDC SS700).